A 347-amino-acid chain; its full sequence is Coproporphyrinogen-III oxidase, aerobic 2 (347 aa).

Positions 1–31 (MGRHSDNSLQESANHTVLLTSPTNTIPKDSR) are disordered. Positions 7-31 (NSLQESANHTVLLTSPTNTIPKDSR) are enriched in polar residues. The segment at 75–84 (VIREGRVFEQ) is important for dimerization. S119 contributes to the substrate binding site. The Proton donor role is filled by H133. Residues 135–137 (NYR) and 305–310 (KGRTES) each bind substrate. Residues 287–322 (YVEFNLVYDRGTVFGLQTKGRTESILMSLPPLARWE) are important for dimerization.

The protein belongs to the aerobic coproporphyrinogen-III oxidase family. Homodimer.

Its subcellular location is the cytoplasm. The catalysed reaction is coproporphyrinogen III + O2 + 2 H(+) = protoporphyrinogen IX + 2 CO2 + 2 H2O. It functions in the pathway porphyrin-containing compound metabolism; protoporphyrin-IX biosynthesis; protoporphyrinogen-IX from coproporphyrinogen-III (O2 route): step 1/1. In terms of biological role, key enzyme in heme biosynthesis. Catalyzes the oxidative decarboxylation of propionic acid side chains of rings A and B of coproporphyrinogen III. The protein is Coproporphyrinogen-III oxidase, aerobic 2 of Nostoc sp. (strain PCC 7120 / SAG 25.82 / UTEX 2576).